The chain runs to 109 residues: Non-structural protein ORF4a (109 aa).

In terms of assembly, interacts with host PRKRA/PACT.

It is found in the host cytoplasm. Its function is as follows. DsRNA-binding protein that plays a role in the inhibition of host innate response. Suppresses host PACT-induced activation of RIGI and MDA5 and thereby circumvents the production of type I interferons. Also prevents the activation of host NF-kappa-B. Inhibits the integrated stress response (ISR) in the infected cell by binding to dsRNA and inhibiting EIF2AK2-mediated phosphorylation of EIF2S1/eIF2-alpha. Stress granule formation is thus inhibited, which allows protein synthesis and viral replication. This is Non-structural protein ORF4a (ORF4a) from Middle East respiratory syndrome-related coronavirus (isolate United Kingdom/H123990006/2012) (MERS-CoV).